Here is a 680-residue protein sequence, read N- to C-terminus: Dihydroxyacetone phosphate acyltransferase (680 aa).

Phosphoserine occurs at positions 12 and 17. The short motif at 162–167 (HRSYID) is the HXXXXD motif element. At K643 the chain carries N6-acetyllysine. The short motif at 678-680 (AKL) is the Microbody targeting signal element.

This sequence belongs to the GPAT/DAPAT family. Part of a heterotrimeric complex composed of GNPAT, AGPS and a modified form of GNPAT.

The protein resides in the peroxisome membrane. It carries out the reaction dihydroxyacetone phosphate + an acyl-CoA = a 1-acylglycerone 3-phosphate + CoA. It catalyses the reaction dihydroxyacetone phosphate + hexadecanoyl-CoA = 1-hexadecanoylglycerone 3-phosphate + CoA. The protein operates within membrane lipid metabolism; glycerophospholipid metabolism. Functionally, dihydroxyacetonephosphate acyltransferase catalyzing the first step in the biosynthesis of plasmalogens, a subset of phospholipids that differ from other glycerolipids by having an alkyl chain attached through a vinyl ether linkage at the sn-1 position of the glycerol backbone, and which unique physical properties have an impact on various aspects of cell signaling and membrane biology. The protein is Dihydroxyacetone phosphate acyltransferase of Bos taurus (Bovine).